Consider the following 302-residue polypeptide: Oligopeptide transport system permease protein OppC (302 aa).

Over 1-39 (MMLSKKNSETLENFSEKLEVEGRSLWQDARRRFMHNRAA) the chain is Cytoplasmic. A helical membrane pass occupies residues 40 to 62 (VASLIVLFLIALFVTVAPMLSQF). Residues 63 to 102 (TYFDTDWGMMSSAPDMASGHYFGTDSSGRDLLVRVAIGGR) lie on the Periplasmic side of the membrane. The ABC transmembrane type-1 domain maps to 101-290 (GRISLMVGIA…VTLFCFNFIG (190 aa)). The chain crosses the membrane as a helical span at residues 103–125 (ISLMVGIAAALVAVIVGTLYGSL). The Cytoplasmic portion of the chain corresponds to 126 to 137 (SGYLGGKIDSVM). The helical transmembrane segment at 138–160 (MRLLEILNSFPFMFFVILLVTFF) threads the bilayer. The Periplasmic segment spans residues 161 to 163 (GQN). Residues 164-183 (ILLIFVAIGMVSWLDMARIV) traverse the membrane as a helical segment. At 184 to 213 (RGQTLSLKRKEFIEAAQVGGVSTASIVIRH) the chain is on the cytoplasmic side. A helical transmembrane segment spans residues 214 to 236 (IVPNVLGVVVVYASLLVPSMILF). At 237 to 267 (ESFLSFLGLGTQEPLSSWGALLSDGANSMEV) the chain is on the periplasmic side. The chain crosses the membrane as a helical span at residues 268 to 290 (SPWLLLFPAGFLVVTLFCFNFIG). The Cytoplasmic segment spans residues 291 to 302 (DGLRDALDPKDR).

This sequence belongs to the binding-protein-dependent transport system permease family. OppBC subfamily. As to quaternary structure, the complex is composed of two ATP-binding proteins (OppD and OppF), two transmembrane proteins (OppB and OppC) and a solute-binding protein (OppA).

It is found in the cell inner membrane. Part of the ABC transporter complex OppABCDF involved in the uptake of oligopeptides, including the cell wall murein tripeptide L-alanyl-gamma-D-glutamyl-meso-diaminopimelate. Responsible for the translocation of the substrate across the membrane. Plays an important nutritional role and is involved in the recycling of cell wall peptides. This chain is Oligopeptide transport system permease protein OppC, found in Salmonella typhimurium (strain LT2 / SGSC1412 / ATCC 700720).